We begin with the raw amino-acid sequence, 461 residues long: UPF0210 protein LCABL_10110 (461 aa).

It belongs to the UPF0210 family. As to quaternary structure, homodimer.

This Lacticaseibacillus casei (strain BL23) (Lactobacillus casei) protein is UPF0210 protein LCABL_10110.